Here is a 382-residue protein sequence, read N- to C-terminus: Transcription factor MYB104 (382 aa).

2 consecutive HTH myb-type domains span residues 13–69 and 70–120; these read KKTF…KPSL and KKGP…MRLK. 2 consecutive DNA-binding regions (H-T-H motif) follow at residues 41–65 and 93–116; these read WTHV…MNHL and WSQM…NARR. The disordered stretch occupies residues 326-364; sequence IPKTDTSSESQLFQSSLRSHTDATPDIANTTGYVGSNER. 2 stretches are compositionally biased toward polar residues: residues 329–343 and 352–364; these read TDTS…SSLR and IANT…SNER.

The protein localises to the nucleus. This Arabidopsis thaliana (Mouse-ear cress) protein is Transcription factor MYB104 (MYB104).